The chain runs to 229 residues: Uracil-DNA glycosylase (229 aa).

The active-site Proton acceptor is the Asp-70.

This sequence belongs to the uracil-DNA glycosylase (UDG) superfamily. UNG family.

It is found in the cytoplasm. The catalysed reaction is Hydrolyzes single-stranded DNA or mismatched double-stranded DNA and polynucleotides, releasing free uracil.. Excises uracil residues from the DNA which can arise as a result of misincorporation of dUMP residues by DNA polymerase or due to deamination of cytosine. The protein is Uracil-DNA glycosylase of Chlamydia trachomatis serovar A (strain ATCC VR-571B / DSM 19440 / HAR-13).